Here is a 255-residue protein sequence, read N- to C-terminus: Uracil-DNA glycosylase (255 aa).

Residue Asp-90 is the Proton acceptor of the active site.

It belongs to the uracil-DNA glycosylase (UDG) superfamily. UNG family.

The protein resides in the host nucleus. The catalysed reaction is Hydrolyzes single-stranded DNA or mismatched double-stranded DNA and polynucleotides, releasing free uracil.. Excises uracil residues from the DNA which can arise as a result of misincorporation of dUMP residues by DNA polymerase or deamination of cytosines. Therefore may reduce deleterious uracil incorporation into the viral genome, particularly in terminally differentiated cells which lack DNA repair enzymes. This is Uracil-DNA glycosylase from Equine herpesvirus 2 (strain 86/87) (EHV-2).